A 445-amino-acid polypeptide reads, in one-letter code: Ribosomal protein uS12 methylthiotransferase RimO (445 aa).

The MTTase N-terminal domain occupies 4 to 119; it reads IKVALVSLGC…LLESIKVFLK (116 aa). 6 residues coordinate [4Fe-4S] cluster: Cys-13, Cys-48, Cys-82, Cys-156, Cys-160, and Cys-163. The region spanning 142-372 is the Radical SAM core domain; the sequence is TTPTYTAYVR…MILQQSISKD (231 aa). In terms of domain architecture, TRAM spans 375-441; the sequence is KEKIGKTYEV…EYDLIGVVYN (67 aa).

Belongs to the methylthiotransferase family. RimO subfamily. It depends on [4Fe-4S] cluster as a cofactor.

Its subcellular location is the cytoplasm. It carries out the reaction L-aspartate(89)-[ribosomal protein uS12]-hydrogen + (sulfur carrier)-SH + AH2 + 2 S-adenosyl-L-methionine = 3-methylsulfanyl-L-aspartate(89)-[ribosomal protein uS12]-hydrogen + (sulfur carrier)-H + 5'-deoxyadenosine + L-methionine + A + S-adenosyl-L-homocysteine + 2 H(+). In terms of biological role, catalyzes the methylthiolation of an aspartic acid residue of ribosomal protein uS12. The sequence is that of Ribosomal protein uS12 methylthiotransferase RimO from Clostridium botulinum (strain ATCC 19397 / Type A).